A 229-amino-acid chain; its full sequence is Peptidase E (229 aa).

Active-site charge relay system residues include Ser-120, Asp-135, and His-157.

It belongs to the peptidase S51 family.

It localises to the cytoplasm. The enzyme catalyses Dipeptidase E catalyzes the hydrolysis of dipeptides Asp-|-Xaa. It does not act on peptides with N-terminal Glu, Asn or Gln, nor does it cleave isoaspartyl peptides.. Functionally, hydrolyzes dipeptides containing N-terminal aspartate residues. May play a role in allowing the cell to use peptide aspartate to spare carbon otherwise required for the synthesis of the aspartate family of amino acids. The sequence is that of Peptidase E from Salmonella typhi.